The primary structure comprises 190 residues: Large ribosomal subunit protein bL17 (190 aa).

A compositionally biased stretch (low complexity) spans 135-165 (AKAAPAAEEAPAEEAPAAEEAATEEAPAAEE). Residues 135–190 (AKAAPAAEEAPAEEAPAAEEAATEEAPAAEETATEEAAAEEAPAAEEAPAEEKDAK) are disordered.

Belongs to the bacterial ribosomal protein bL17 family. Part of the 50S ribosomal subunit. Contacts protein L32.

The sequence is that of Large ribosomal subunit protein bL17 from Pseudarthrobacter chlorophenolicus (strain ATCC 700700 / DSM 12829 / CIP 107037 / JCM 12360 / KCTC 9906 / NCIMB 13794 / A6) (Arthrobacter chlorophenolicus).